The chain runs to 68 residues: Protein SlyX homolog (68 aa).

The protein belongs to the SlyX family.

The protein is Protein SlyX homolog of Brucella melitensis biotype 1 (strain ATCC 23456 / CCUG 17765 / NCTC 10094 / 16M).